The following is a 123-amino-acid chain: Small ribosomal subunit protein uS12 (123 aa).

The disordered stretch occupies residues 1–26; sequence MPTLNQLVRKPRKRPVAKSKVPALDA. At Asp-89 the chain carries 3-methylthioaspartic acid. Residues 104–123 form a disordered region; it reads TAGVKNRKQSRSKYGAKRPK. Over residues 108-123 the composition is skewed to basic residues; sequence KNRKQSRSKYGAKRPK.

This sequence belongs to the universal ribosomal protein uS12 family. In terms of assembly, part of the 30S ribosomal subunit. Contacts proteins S8 and S17. May interact with IF1 in the 30S initiation complex.

With S4 and S5 plays an important role in translational accuracy. Its function is as follows. Interacts with and stabilizes bases of the 16S rRNA that are involved in tRNA selection in the A site and with the mRNA backbone. Located at the interface of the 30S and 50S subunits, it traverses the body of the 30S subunit contacting proteins on the other side and probably holding the rRNA structure together. The combined cluster of proteins S8, S12 and S17 appears to hold together the shoulder and platform of the 30S subunit. This chain is Small ribosomal subunit protein uS12, found in Acidithiobacillus ferrooxidans (strain ATCC 23270 / DSM 14882 / CIP 104768 / NCIMB 8455) (Ferrobacillus ferrooxidans (strain ATCC 23270)).